The following is a 76-amino-acid chain: Conotoxin VnMEKL-0111 (76 aa).

A signal peptide spans methionine 1–alanine 18. A propeptide spanning residues leucine 19–arginine 45 is cleaved from the precursor. 3 cysteine pairs are disulfide-bonded: cysteine 49/cysteine 65, cysteine 56/cysteine 70, and cysteine 64/cysteine 74.

The protein belongs to the conotoxin O2 superfamily. Expressed by the venom duct.

It localises to the secreted. The polypeptide is Conotoxin VnMEKL-0111 (Conus ventricosus (Mediterranean cone)).